Reading from the N-terminus, the 511-residue chain is V-type proton ATPase subunit B, brain isoform (511 aa).

An ATP-binding site is contributed by arginine 400.

The protein belongs to the ATPase alpha/beta chains family. As to quaternary structure, V-ATPase is a heteromultimeric enzyme made up of two complexes: the ATP-hydrolytic V1 complex and the proton translocation V0 complex. The V1 complex consists of three catalytic AB heterodimers that form a heterohexamer, three peripheral stalks each consisting of EG heterodimers, one central rotor including subunits D and F, and the regulatory subunits C and H. The proton translocation complex V0 consists of the proton transport subunit a, a ring of proteolipid subunits c9c'', rotary subunit d, subunits e and f, and the accessory subunits ATP6AP1/Ac45 and ATP6AP2/PRR.

It localises to the apical cell membrane. The protein resides in the melanosome. Its subcellular location is the cytoplasm. It is found in the cytoplasmic vesicle. The protein localises to the secretory vesicle. It localises to the synaptic vesicle membrane. The protein resides in the clathrin-coated vesicle membrane. Its function is as follows. Non-catalytic subunit of the V1 complex of vacuolar(H+)-ATPase (V-ATPase), a multisubunit enzyme composed of a peripheral complex (V1) that hydrolyzes ATP and a membrane integral complex (V0) that translocates protons. V-ATPase is responsible for acidifying and maintaining the pH of intracellular compartments and in some cell types, is targeted to the plasma membrane, where it is responsible for acidifying the extracellular environment. In renal intercalated cells, can partially compensate the lack of ATP6V1B1 and mediate secretion of protons (H+) into the urine under base-line conditions but not in conditions of acid load. This is V-type proton ATPase subunit B, brain isoform (ATP6V1B2) from Pongo abelii (Sumatran orangutan).